The sequence spans 388 residues: Chorismate synthase (388 aa).

Residues arginine 39 and arginine 45 each contribute to the NADP(+) site. FMN contacts are provided by residues arginine 130–serine 132, asparagine 251–alanine 252, glycine 296, lysine 311–threonine 315, and arginine 337.

Belongs to the chorismate synthase family. In terms of assembly, homotetramer. FMNH2 is required as a cofactor.

It catalyses the reaction 5-O-(1-carboxyvinyl)-3-phosphoshikimate = chorismate + phosphate. It participates in metabolic intermediate biosynthesis; chorismate biosynthesis; chorismate from D-erythrose 4-phosphate and phosphoenolpyruvate: step 7/7. Functionally, catalyzes the anti-1,4-elimination of the C-3 phosphate and the C-6 proR hydrogen from 5-enolpyruvylshikimate-3-phosphate (EPSP) to yield chorismate, which is the branch point compound that serves as the starting substrate for the three terminal pathways of aromatic amino acid biosynthesis. This reaction introduces a second double bond into the aromatic ring system. The protein is Chorismate synthase of Streptococcus pyogenes serotype M1.